We begin with the raw amino-acid sequence, 115 residues long: Large ribosomal subunit protein bL19 (115 aa).

It belongs to the bacterial ribosomal protein bL19 family.

Its function is as follows. This protein is located at the 30S-50S ribosomal subunit interface and may play a role in the structure and function of the aminoacyl-tRNA binding site. The protein is Large ribosomal subunit protein bL19 of Erwinia tasmaniensis (strain DSM 17950 / CFBP 7177 / CIP 109463 / NCPPB 4357 / Et1/99).